Here is a 94-residue protein sequence, read N- to C-terminus: Co-chaperonin GroES (94 aa).

This sequence belongs to the GroES chaperonin family. In terms of assembly, heptamer of 7 subunits arranged in a ring. Interacts with the chaperonin GroEL.

The protein localises to the cytoplasm. Its function is as follows. Together with the chaperonin GroEL, plays an essential role in assisting protein folding. The GroEL-GroES system forms a nano-cage that allows encapsulation of the non-native substrate proteins and provides a physical environment optimized to promote and accelerate protein folding. GroES binds to the apical surface of the GroEL ring, thereby capping the opening of the GroEL channel. This is Co-chaperonin GroES from Bacillus cereus (strain ZK / E33L).